Reading from the N-terminus, the 410-residue chain is Arginine deiminase (410 aa).

Cys-400 functions as the Amidino-cysteine intermediate in the catalytic mechanism.

The protein belongs to the arginine deiminase family.

It localises to the cytoplasm. It catalyses the reaction L-arginine + H2O = L-citrulline + NH4(+). It functions in the pathway amino-acid degradation; L-arginine degradation via ADI pathway; carbamoyl phosphate from L-arginine: step 1/2. The protein is Arginine deiminase of Streptococcus agalactiae serotype Ia (strain ATCC 27591 / A909 / CDC SS700).